Reading from the N-terminus, the 148-residue chain is UPF0260 protein PC1_1943 (148 aa).

It belongs to the UPF0260 family.

The sequence is that of UPF0260 protein PC1_1943 from Pectobacterium carotovorum subsp. carotovorum (strain PC1).